A 246-amino-acid polypeptide reads, in one-letter code: UDP-N-acetyl-D-mannosaminuronic acid transferase (246 aa).

The protein belongs to the glycosyltransferase 26 family.

It catalyses the reaction UDP-N-acetyl-alpha-D-mannosaminouronate + N-acetyl-alpha-D-glucosaminyl-di-trans,octa-cis-undecaprenyl diphosphate = beta-D-ManNAcA-(1-&gt;4)-alpha-D-GlcNAc-di-trans,octa-cis-undecaprenyl diphosphate + UDP + H(+). It functions in the pathway bacterial outer membrane biogenesis; enterobacterial common antigen biosynthesis. In terms of biological role, catalyzes the synthesis of Und-PP-GlcNAc-ManNAcA (Lipid II), the second lipid-linked intermediate involved in enterobacterial common antigen (ECA) synthesis. The sequence is that of UDP-N-acetyl-D-mannosaminuronic acid transferase from Salmonella choleraesuis (strain SC-B67).